The sequence spans 87 residues: Toxin RelG (87 aa).

Belongs to the RelE toxin family. In terms of assembly, interacts with cognate antitoxin RelF, which neutralizes the toxin. Also interacts with non-cognate antitoxin RelB in vitro, in M.smegmatis this neutralizes the toxicity of this toxin.

Its function is as follows. Toxic component of a type II toxin-antitoxin (TA) system. Has RNase activity and preferentially cleaves at the 3'-end of purine ribonucleotides. Overexpression in M.tuberculosis or M.smegmatis inhibits colony formation in a bacteriostatic rather than bacteriocidal fashion. Its toxic effect is neutralized by coexpression with cognate antitoxin RelB2 (shown only for M.smegmatis). Overexpression also increases the number of gentamicin-tolerant and levofloxacin-tolerant persister cells. In combination with cognate antitoxin RelF represses its own promoter. Has been seen to bind DNA in complex with antitoxin RelF but not alone. This Mycobacterium tuberculosis (strain ATCC 25618 / H37Rv) protein is Toxin RelG (relG).